Consider the following 536-residue polypeptide: Major facilitator superfamily domain-containing protein 4B (536 aa).

12 helical membrane-spanning segments follow: residues 19-39, 53-73, 81-101, 105-125, 140-160, 211-231, 297-317, 341-361, 366-386, 391-411, 428-448, and 456-476; these read LTYW…GPTI, ITWV…SGGA, ALLA…IIPL, VLLL…IDTI, IFLQ…PLIA, YAFW…FVLM, FFLI…IMGV, LNCI…PLSY, VHLL…LMIL, VFLF…FPCL, VLVT…GTLI, and FLVC…SVIL.

Belongs to the major facilitator superfamily.

Its subcellular location is the membrane. This is Major facilitator superfamily domain-containing protein 4B from Danio rerio (Zebrafish).